A 319-amino-acid polypeptide reads, in one-letter code: Annexin A5 (319 aa).

An N-acetylalanine modification is found at Ala2. Annexin repeat units follow at residues 13 to 84, 85 to 156, 168 to 240, and 244 to 315; these read FDGR…AMMK, PSRL…VLLQ, AQVE…AVVK, and SIPA…LLCG. Lys27 is covalently cross-linked (Glycyl lysine isopeptide (Lys-Gly) (interchain with G-Cter in SUMO1); alternate). Lys27 participates in a covalent cross-link: Glycyl lysine isopeptide (Lys-Gly) (interchain with G-Cter in SUMO2); alternate. Ser35 carries the post-translational modification Phosphoserine. Residues Lys68, Lys74, Lys77, Lys95, and Lys99 each carry the N6-acetyllysine modification. Residue Lys288 is modified to N6-succinyllysine. A [IL]-x-C-x-x-[DE] motif motif is present at residues 312–318; the sequence is LLCGGED.

It belongs to the annexin family. As to quaternary structure, monomer. Binds ATRX and EIF5B. S-nitrosylation is induced by interferon-gamma and oxidatively-modified low-densitity lipoprotein (LDL(ox)) possibly implicating the iNOS-S100A8/9 transnitrosylase complex.

In terms of biological role, this protein is an anticoagulant protein that acts as an indirect inhibitor of the thromboplastin-specific complex, which is involved in the blood coagulation cascade. This chain is Annexin A5 (Anxa5), found in Mus musculus (Mouse).